The following is a 201-amino-acid chain: Probable cytokinin riboside 5'-monophosphate phosphoribohydrolase LOG6 (201 aa).

Substrate is bound by residues glutamate 89, 107–108 (RK), 124–130 (GYGTLEE), and threonine 136.

Belongs to the LOG family.

It carries out the reaction N(6)-(dimethylallyl)adenosine 5'-phosphate + H2O = N(6)-dimethylallyladenine + D-ribose 5-phosphate. It catalyses the reaction 9-ribosyl-trans-zeatin 5'-phosphate + H2O = trans-zeatin + D-ribose 5-phosphate. In terms of biological role, cytokinin-activating enzyme working in the direct activation pathway. Phosphoribohydrolase that converts inactive cytokinin nucleotides to the biologically active free-base forms. The chain is Probable cytokinin riboside 5'-monophosphate phosphoribohydrolase LOG6 (LOG6) from Arabidopsis thaliana (Mouse-ear cress).